Consider the following 262-residue polypeptide: CD99 antigen-like protein 2 (262 aa).

The signal sequence occupies residues 1–25 (MVAWRSAFLVCLAFSLATLVQRGSG). Topologically, residues 26–185 (DFDDFNLEDA…PGSGMVAEPG (160 aa)) are extracellular. The tract at residues 38–181 (ETSSVKQPWD…SNDDPGSGMV (144 aa)) is disordered. Low complexity-rich tracts occupy residues 49–60 (TTTTTTNRPGTT) and 98–119 (VTTTTKRPVTTRAPANTLGNDF). Basic and acidic residues-rich tracts occupy residues 125–136 (LDDRNDRDDGRR) and 159–168 (YKPDKGKGDG). S178 carries O-linked (Xyl...) (chondroitin sulfate) serine glycosylation. The helical transmembrane segment at 186–206 (TIAGVASALAMALIGAVSSYI) threads the bilayer. At 207–262 (SYQQKKFCFSIQQGLNADYVKGENLEAVVCEEPQVKYSTLHTQSAEPPPPPEPARI) the chain is on the cytoplasmic side.

It belongs to the CD99 family. O-glycosylated. In terms of tissue distribution, detected in cerebrospinal fluid (at protein level). Expressed in many tissues, with low expression in thymus.

It is found in the cell membrane. The protein localises to the cell junction. The protein resides in the secreted. In terms of biological role, plays a role in a late step of leukocyte extravasation helping cells to overcome the endothelial basement membrane. Acts at the same site as, but independently of, PECAM1. Homophilic adhesion molecule, but these interactions may not be required for cell aggregation. The chain is CD99 antigen-like protein 2 (CD99L2) from Homo sapiens (Human).